Reading from the N-terminus, the 482-residue chain is E3 ubiquitin-protein ligase makorin-1 (482 aa).

Low complexity predominate over residues Ala26–Ser38. Positions Ala26–Gly52 are disordered. The segment covering Gly40 to Gly52 has biased composition (gly residues). C3H1-type zinc fingers lie at residues Trp55 to Ser82, Ser84 to Pro111, and Glu208 to Ser235. The interval Cys236–His263 is makorin-type Cys-His. The RING-type zinc-finger motif lies at Cys281–Arg335. Residues Ala364 to Pro393 form a C3H1-type 4 zinc finger.

Interacts with p53/TP53 and CDKN1A. Interacts with TERT, modulating telomere length homeostasis. Post-translationally, auto-ubiquitinated; which leads to proteasomal degradation. In terms of tissue distribution, ubiquitous.

The catalysed reaction is S-ubiquitinyl-[E2 ubiquitin-conjugating enzyme]-L-cysteine + [acceptor protein]-L-lysine = [E2 ubiquitin-conjugating enzyme]-L-cysteine + N(6)-ubiquitinyl-[acceptor protein]-L-lysine.. The protein operates within protein modification; protein ubiquitination. Its function is as follows. E3 ubiquitin ligase catalyzing the covalent attachment of ubiquitin moieties onto substrate proteins. These substrates include FILIP1, p53/TP53, CDKN1A and TERT. Keeps cells alive by suppressing p53/TP53 under normal conditions, but stimulates apoptosis by repressing CDKN1A under stress conditions. Acts as a negative regulator of telomerase. Has negative and positive effects on RNA polymerase II-dependent transcription. This Homo sapiens (Human) protein is E3 ubiquitin-protein ligase makorin-1 (MKRN1).